A 332-amino-acid chain; its full sequence is MRLLAFLSLLALVLQETGTASLPRKERKRREEQMPREGDSFEVLPLRNDVLNPDNYGEVIDLSNYEELTDYGDQLPEVKVTSLAPATSISPAKSTTAPGTPSSNPTMTRPTTAGLLLSSQPNHGLPTCLVCVCLGSSVYCDDIDLEDIPPLPRRTAYLYARFNRISRIRAEDFKGLTKLKRIDLSNNLISSIDNDAFRLLHALQDLILPENQLEALPVLPSGIEFLDVRLNRLQSSGIQPAAFRAMEKLQFLYLSDNLLDSIPGPLPLSLRSVHLQNNLIETMQRDVFCDPEEHKHTRRQLEDIRLDGNPINLSLFPSAYFCLPRLPIGRFT.

An N-terminal signal peptide occupies residues 1–19; that stretch reads MRLLAFLSLLALVLQETGT. Residues 21–41 are disordered; sequence SLPRKERKRREEQMPREGDSF. Basic and acidic residues predominate over residues 29 to 39; the sequence is RREEQMPREGD. Tyr-65 and Tyr-71 each carry sulfotyrosine. A disordered region spans residues 86 to 106; it reads ATSISPAKSTTAPGTPSSNPT. The 38-residue stretch at 116–153 folds into the LRRNT domain; the sequence is LLSSQPNHGLPTCLVCVCLGSSVYCDDIDLEDIPPLPR. Residue Tyr-139 is modified to Sulfotyrosine. 6 LRR repeats span residues 154-175, 178-199, 202-223, 248-269, 270-290, and 300-320; these read RTAYLYARFNRISRIRAEDFKG, KLKRIDLSNNLISSIDNDAFRL, ALQDLILPENQLEALPVLPSGI, KLQFLYLSDNLLDSIPGPLPLS, LRSVHLQNNLIETMQRDVFCD, and QLEDIRLDGNPINLSLFPSAY. A disulfide bridge connects residues Cys-289 and Cys-322. The N-linked (GlcNAc...) asparagine glycan is linked to Asn-312.

Belongs to the small leucine-rich proteoglycan (SLRP) family. SLRP class III subfamily. As to quaternary structure, homodimer. O-glycosylated. Post-translationally, proteolytically cleaved by MMP1, MMP2, MMP3, MMP7, MMP8, MMP9, ADAMTS4, and ADAMTS5. Proteolytically cleaved by MMP13. The degradation of OPTC by proteases may contribute to osteoarthritis pathophysiology. In terms of processing, sulfated on tyrosine residues. Expressed in cartilage and synovial membranes (at protein level). Expressed in the retina, iris, ligament, skin and fetal liver (at protein level). Expressed in the retinal pigment epithelium (at protein level). Expressed in synovial fibroblasts and subchondral bone osteoblasts.

The protein resides in the secreted. The protein localises to the extracellular space. It is found in the extracellular matrix. Its function is as follows. Inhibits angiogenesis in the vitreous humor of the eye, and therefore represses neovascularization. Binds collagen fibrils. May be involved in collagen fiber organization via regulation of other members of the small leucine-rich repeat proteoglycan superfamily. The chain is Opticin (OPTC) from Homo sapiens (Human).